An 838-amino-acid chain; its full sequence is Probable bifunctional folylpolyglutamate synthase/dihydropteroate synthase (838 aa).

The folylpolyglutamate synthase stretch occupies residues 1 to 418 (MEYHEAVNFL…LVVGSLYVVA (418 aa)). Residue 46–52 (GSNGKGS) coordinates ATP. The tract at residues 541–561 (AADAGEDDERGAGDASDAGHD) is disordered. Residues 569–819 (TAVMGILNVT…DVPENVAAVN (251 aa)) enclose the Pterin-binding domain. Positions 571–838 (VMGILNVTPN…RFEADAERED (268 aa)) are DHPS. Asn-576 is a binding site for Mg(2+). Residues Thr-616, Asp-649, Asn-668, Asp-738, Lys-774, and 807–809 (RVH) contribute to the (7,8-dihydropterin-6-yl)methyl diphosphate site.

In the N-terminal section; belongs to the folylpolyglutamate synthase family. This sequence in the C-terminal section; belongs to the DHPS family. Mg(2+) is required as a cofactor.

The enzyme catalyses (6S)-5,6,7,8-tetrahydrofolyl-(gamma-L-Glu)(n) + L-glutamate + ATP = (6S)-5,6,7,8-tetrahydrofolyl-(gamma-L-Glu)(n+1) + ADP + phosphate + H(+). It carries out the reaction (7,8-dihydropterin-6-yl)methyl diphosphate + 4-aminobenzoate = 7,8-dihydropteroate + diphosphate. Its pathway is cofactor biosynthesis; tetrahydrofolylpolyglutamate biosynthesis. The protein operates within cofactor biosynthesis; tetrahydrofolate biosynthesis; 7,8-dihydrofolate from 2-amino-4-hydroxy-6-hydroxymethyl-7,8-dihydropteridine diphosphate and 4-aminobenzoate: step 1/2. In terms of biological role, can complement an H.volcanii mutant strain that is thymidine auxotroph because it lacks the two dihydrofolate reductase genes encoded by hdrA and hdrB. The polypeptide is Probable bifunctional folylpolyglutamate synthase/dihydropteroate synthase (folCP) (Haloferax volcanii (strain ATCC 29605 / DSM 3757 / JCM 8879 / NBRC 14742 / NCIMB 2012 / VKM B-1768 / DS2) (Halobacterium volcanii)).